Consider the following 656-residue polypeptide: Sulfate transporter 1.3 (656 aa).

The segment at 1–30 is disordered; that stretch reads MSARAHPVDDDGEISPVERSSPRQANTPYV. The Cytoplasmic portion of the chain corresponds to 1-94; that stretch reads MSARAHPVDD…GRKYNLKLFR (94 aa). The helical transmembrane segment at 95-115 threads the bilayer; that stretch reads GDLIAGLTIASLCIPQDIGYA. Topologically, residues 116-119 are extracellular; it reads KLAS. The helical transmembrane segment at 120-140 threads the bilayer; sequence LDPKYGLYSSFVPPLVYACMG. Residues 141 to 144 are Cytoplasmic-facing; that stretch reads SSKD. The chain crosses the membrane as a helical span at residues 145–165; sequence IAIGPVAVVSLLLGTLLRAEI. The Extracellular segment spans residues 166–176; it reads DPNTNPNEYLR. Helical transmembrane passes span 177-197 and 198-218; these read LAFTSTFFAGVTQAALGFFRL and GFLIDFLSHAAVVGFMGGAAI. Over 219-256 the chain is Extracellular; that stretch reads TIALQQLKGFLGINKFTKKTDIIAVLSSVISSAHHGWN. The helical transmembrane segment at 257–277 threads the bilayer; it reads WQTILISASFLIFLLISKFIG. Residues 278–283 lie on the Cytoplasmic side of the membrane; it reads KRNKKL. The chain crosses the membrane as a helical span at residues 284-304; the sequence is FWIPAIAPLVSVIISTFFVYI. Over 305-342 the chain is Extracellular; it reads TRADKKGVQIVKHLDKGLNPSSLRLIYFSGDYLLKGFR. Residues 343–363 form a helical membrane-spanning segment; it reads IGVVSGMVALTEAVAIGRTFA. At 364–375 the chain is on the cytoplasmic side; that stretch reads AMKDYQIDGNKE. Residues 376-396 traverse the membrane as a helical segment; it reads MVALGAMNVIGSMTSCYVSTG. At 397-412 the chain is on the extracellular side; it reads SFSRSAVNFMAGCQTA. The helical transmembrane segment at 413 to 433 threads the bilayer; it reads VSNIIMSIVVLLTLLFLTPLF. Residues 434 to 441 are Cytoplasmic-facing; sequence KYTPNAIL. The helical transmembrane segment at 442 to 462 threads the bilayer; that stretch reads AAIIINAVIPLVDVNATILIF. Residues 463 to 473 lie on the Extracellular side of the membrane; that stretch reads KIDKLDFVACM. The helical transmembrane segment at 474 to 494 threads the bilayer; that stretch reads GAFFGVIFVSVEIGLLIAVGI. Residues 495–656 are Cytoplasmic-facing; that stretch reads SFAKILLQVT…SCSPKLSDEV (162 aa). The STAS domain maps to 525–648; sequence QYPEATRIPG…LTVAEAVDSC (124 aa).

The protein belongs to the SLC26A/SulP transporter (TC 2.A.53) family. Expressed in the phloem of cotyledons, hypocotyls and roots.

It localises to the membrane. Functionally, high-affinity H(+)/sulfate cotransporter that mediates the loading of sulfate into the sieve tube. Plays a central role in the regulation of sulfate assimilation. The polypeptide is Sulfate transporter 1.3 (SULTR1;3) (Arabidopsis thaliana (Mouse-ear cress)).